We begin with the raw amino-acid sequence, 224 residues long: Cytidylate kinase (224 aa).

Position 11–19 (11–19 (GPAAAGKST)) interacts with ATP.

This sequence belongs to the cytidylate kinase family. Type 1 subfamily.

It is found in the cytoplasm. The catalysed reaction is CMP + ATP = CDP + ADP. It catalyses the reaction dCMP + ATP = dCDP + ADP. This chain is Cytidylate kinase, found in Listeria monocytogenes serovar 1/2a (strain ATCC BAA-679 / EGD-e).